The primary structure comprises 217 residues: 3-isopropylmalate dehydratase small subunit (217 aa).

This sequence belongs to the LeuD family. LeuD type 1 subfamily. In terms of assembly, heterodimer of LeuC and LeuD.

The enzyme catalyses (2R,3S)-3-isopropylmalate = (2S)-2-isopropylmalate. It participates in amino-acid biosynthesis; L-leucine biosynthesis; L-leucine from 3-methyl-2-oxobutanoate: step 2/4. Functionally, catalyzes the isomerization between 2-isopropylmalate and 3-isopropylmalate, via the formation of 2-isopropylmaleate. The sequence is that of 3-isopropylmalate dehydratase small subunit from Delftia acidovorans (strain DSM 14801 / SPH-1).